The chain runs to 209 residues: Nucleoside triphosphate pyrophosphatase (209 aa).

Aspartate 79 serves as the catalytic Proton acceptor.

This sequence belongs to the Maf family. A divalent metal cation serves as cofactor.

The protein localises to the cytoplasm. It carries out the reaction a ribonucleoside 5'-triphosphate + H2O = a ribonucleoside 5'-phosphate + diphosphate + H(+). It catalyses the reaction a 2'-deoxyribonucleoside 5'-triphosphate + H2O = a 2'-deoxyribonucleoside 5'-phosphate + diphosphate + H(+). Functionally, nucleoside triphosphate pyrophosphatase. May have a dual role in cell division arrest and in preventing the incorporation of modified nucleotides into cellular nucleic acids. This is Nucleoside triphosphate pyrophosphatase from Mycolicibacterium vanbaalenii (strain DSM 7251 / JCM 13017 / BCRC 16820 / KCTC 9966 / NRRL B-24157 / PYR-1) (Mycobacterium vanbaalenii).